Consider the following 102-residue polypeptide: Small ribosomal subunit protein uS10 (102 aa).

The protein belongs to the universal ribosomal protein uS10 family. As to quaternary structure, part of the 30S ribosomal subunit.

Its function is as follows. Involved in the binding of tRNA to the ribosomes. The chain is Small ribosomal subunit protein uS10 from Thermosipho melanesiensis (strain DSM 12029 / CIP 104789 / BI429).